The primary structure comprises 92 residues: Small ribosomal subunit protein bS20 (92 aa).

A disordered region spans residues 1–23 (MANTPSAKKRAKQAEKRRSHNAS). Residues 7 to 20 (AKKRAKQAEKRRSH) show a composition bias toward basic residues.

The protein belongs to the bacterial ribosomal protein bS20 family.

Its function is as follows. Binds directly to 16S ribosomal RNA. The chain is Small ribosomal subunit protein bS20 from Pseudomonas entomophila (strain L48).